The following is a 327-amino-acid chain: D-alanine--D-alanine ligase (327 aa).

An ATP-grasp domain is found at 113-312 (KRLWMTYGLA…YEDFVMQVVA (200 aa)). 139-194 (AADLGLPLIVKPAREGSSIGLTKVTAADQMRAAFEKAAALDNDVIAETFIDGAELT) provides a ligand contact to ATP. Positions 266, 279, and 281 each coordinate Mg(2+).

Belongs to the D-alanine--D-alanine ligase family. Mg(2+) serves as cofactor. Mn(2+) is required as a cofactor.

It is found in the cytoplasm. The catalysed reaction is 2 D-alanine + ATP = D-alanyl-D-alanine + ADP + phosphate + H(+). It functions in the pathway cell wall biogenesis; peptidoglycan biosynthesis. Cell wall formation. This Cupriavidus necator (strain ATCC 17699 / DSM 428 / KCTC 22496 / NCIMB 10442 / H16 / Stanier 337) (Ralstonia eutropha) protein is D-alanine--D-alanine ligase.